Consider the following 492-residue polypeptide: Asparagine--tRNA ligase, mitochondrial (492 aa).

This sequence belongs to the class-II aminoacyl-tRNA synthetase family.

The protein resides in the mitochondrion matrix. It carries out the reaction tRNA(Asn) + L-asparagine + ATP = L-asparaginyl-tRNA(Asn) + AMP + diphosphate + H(+). In terms of biological role, catalyzes the attachment of asparagine to tRNA(Asn) in the mitochondrion. The chain is Asparagine--tRNA ligase, mitochondrial (SLM5) from Saccharomyces cerevisiae (strain ATCC 204508 / S288c) (Baker's yeast).